The sequence spans 118 residues: Sarafotoxin-i1 (118 aa).

An N-terminal signal peptide occupies residues 1 to 23 (MALLPRLAAGGLLLLLALAALDG). The propeptide occupies 24–84 (KPAPPKLLQK…LSPLRKPQPL (61 aa)). 2 disulfides stabilise this stretch: Cys85/Cys99 and Cys87/Cys95. Positions 112-118 (PSPIQSS) are excised as a propeptide.

The protein belongs to the endothelin/sarafotoxin family. In terms of processing, different length molecules ranging from 15 (85-99) to 30 amino acids (85-114) have been found in the venom. Expressed by the venom gland.

The protein localises to the secreted. Vasoconstrictor activity. These toxins cause cardiac arrest probably as a result of coronary vasospasm. Functionally, sarafotoxin-i3: vasoconstrictor activity. Causes cardiac arrest probably as a result of coronary vasospasm. Displays low agonistic activities towards endothelin-2 receptor (EDNRB) (displays affinity in the micromolar range). This Atractaspis irregularis (Variable burrowing asp) protein is Sarafotoxin-i1.